Reading from the N-terminus, the 776-residue chain is Transcription factor MYB3R-1 (776 aa).

The segment at 1 to 41 (MKREMKAPTTPLESLQGDLKGKQGRTSGPARRSTKGQWTPE) is disordered. HTH myb-type domains are found at residues 30–81 (ARRS…QKVL), 82–137 (NPEL…NPGI), and 138–188 (NKNA…KKKL). DNA-binding regions (H-T-H motif) lie at residues 58 to 81 (WKKI…QKVL), 110 to 133 (WSTI…HNHL), and 161 to 184 (WAEL…NSSV). Disordered stretches follow at residues 217–253 (SSWM…STND), 364–384 (FQSS…TDPE), and 401–435 (DNMK…AETH). 3 stretches are compositionally biased toward polar residues: residues 240 to 253 (CSQA…STND), 364 to 380 (FQSS…SNSD), and 423 to 432 (GKGSLCSQAA). The Nuclear localization signal signature appears at 648–655 (KKRHRDLL).

Component of a DREAM-like complex which modulates a variety of developmentally regulated genes and of the mitotic genes in proliferating and differentiated cells. Expressed ubiquitously at low levels. Expressed in roots, cotyledons, flowers and leaves, especially in vascular tissues.

Its subcellular location is the nucleus. Functionally, transcription factor that binds 5'-AACGG-3' motifs in gene promoters. Transcription activator involved in the regulation of cytokinesis, probably via the activation of several G2/M phase-specific genes transcription (e.g. KNOLLE). Transcription repressor that regulates organ growth. Binds to the promoters of G2/M-specific genes and to E2F target genes to prevent their expression in post-mitotic cells and to restrict the time window of their expression in proliferating cells. Required for the maintenance of diploidy. This Arabidopsis thaliana (Mouse-ear cress) protein is Transcription factor MYB3R-1.